The chain runs to 185 residues: Transmembrane protein 140 (185 aa).

Topologically, residues 1 to 11 (MAGPRPRWRDQ) are cytoplasmic. The chain crosses the membrane as a helical span at residues 12 to 32 (LLFMSIIVLVIVVICLMFYAL). Residues 33–77 (LWEAGNLTDLPNLRIGFYNFCLWNEDTSTLQCHQFPELEALGVPR) are Extracellular-facing. Asn-38 carries an N-linked (GlcNAc...) asparagine glycan. Residues 78-98 (VGLGLARLGVYGSLVLTLFAP) form a helical membrane-spanning segment. Topologically, residues 99-114 (QPLLLAQCNSDERAWR) are cytoplasmic. Residues 115-135 (LAVGFLAVSSVLLAGGLGLFL) traverse the membrane as a helical segment. Residues 136–150 (SYVWKWVRLSLPGPG) lie on the Extracellular side of the membrane. Residues 151-171 (FLALGSAQALLILLLIAMAVF) traverse the membrane as a helical segment. Residues 172–185 (PLRAERAESKLESC) are Cytoplasmic-facing.

Expression significantly higher in gliomas than in normal brain tissues.

Its subcellular location is the membrane. This chain is Transmembrane protein 140 (TMEM140), found in Homo sapiens (Human).